The chain runs to 156 residues: Transcription antitermination protein NusB (156 aa).

Belongs to the NusB family.

In terms of biological role, involved in transcription antitermination. Required for transcription of ribosomal RNA (rRNA) genes. Binds specifically to the boxA antiterminator sequence of the ribosomal RNA (rrn) operons. This Xanthomonas oryzae pv. oryzae (strain MAFF 311018) protein is Transcription antitermination protein NusB.